We begin with the raw amino-acid sequence, 526 residues long: Peptide chain release factor 3 (526 aa).

A tr-type G domain is found at N8–Q277. Residues S17–T24, D85–H89, and N139–D142 each bind GTP.

It belongs to the TRAFAC class translation factor GTPase superfamily. Classic translation factor GTPase family. PrfC subfamily.

It localises to the cytoplasm. In terms of biological role, increases the formation of ribosomal termination complexes and stimulates activities of RF-1 and RF-2. It binds guanine nucleotides and has strong preference for UGA stop codons. It may interact directly with the ribosome. The stimulation of RF-1 and RF-2 is significantly reduced by GTP and GDP, but not by GMP. The sequence is that of Peptide chain release factor 3 from Actinobacillus pleuropneumoniae serotype 3 (strain JL03).